The chain runs to 264 residues: S-adenosylmethionine decarboxylase proenzyme (264 aa).

Serine 111 functions as the Schiff-base intermediate with substrate; via pyruvic acid in the catalytic mechanism. Position 111 is a pyruvic acid (Ser); by autocatalysis (serine 111). Histidine 116 (proton acceptor; for processing activity) is an active-site residue. Cysteine 139 functions as the Proton donor; for catalytic activity in the catalytic mechanism.

The protein belongs to the prokaryotic AdoMetDC family. Type 2 subfamily. In terms of assembly, heterooctamer of four alpha and four beta chains arranged as a tetramer of alpha/beta heterodimers. Pyruvate serves as cofactor. Post-translationally, is synthesized initially as an inactive proenzyme. Formation of the active enzyme involves a self-maturation process in which the active site pyruvoyl group is generated from an internal serine residue via an autocatalytic post-translational modification. Two non-identical subunits are generated from the proenzyme in this reaction, and the pyruvate is formed at the N-terminus of the alpha chain, which is derived from the carboxyl end of the proenzyme. The post-translation cleavage follows an unusual pathway, termed non-hydrolytic serinolysis, in which the side chain hydroxyl group of the serine supplies its oxygen atom to form the C-terminus of the beta chain, while the remainder of the serine residue undergoes an oxidative deamination to produce ammonia and the pyruvoyl group blocking the N-terminus of the alpha chain.

The enzyme catalyses S-adenosyl-L-methionine + H(+) = S-adenosyl 3-(methylsulfanyl)propylamine + CO2. It participates in amine and polyamine biosynthesis; S-adenosylmethioninamine biosynthesis; S-adenosylmethioninamine from S-adenosyl-L-methionine: step 1/1. In terms of biological role, catalyzes the decarboxylation of S-adenosylmethionine to S-adenosylmethioninamine (dcAdoMet), the propylamine donor required for the synthesis of the polyamines spermine and spermidine from the diamine putrescine. In Geobacillus kaustophilus (strain HTA426), this protein is S-adenosylmethionine decarboxylase proenzyme.